Consider the following 854-residue polypeptide: Protein asteroid (854 aa).

A disordered region spans residues 368-427 (SEEECSDDEHSSSSDEKFSDVEEGEDQEEADNQDEEQQEENQDVDSGDEEEEEADEGLEL). A compositionally biased stretch (basic and acidic residues) spans 375–387 (DEHSSSSDEKFSD). Acidic residues predominate over residues 388–427 (VEEGEDQEEADNQDEEQQEENQDVDSGDEEEEEADEGLEL).

The protein belongs to the asteroid family. Expressed in the proliferative tissues of embryos and in the mitotically active tissue anterior to the morphogenetic furrow in eye imaginal disks.

In terms of biological role, may function in EGF receptor signaling. May play a role in compound eye morphogenesis. The chain is Protein asteroid (ast) from Drosophila melanogaster (Fruit fly).